Reading from the N-terminus, the 176-residue chain is Ribosome maturation factor RimM (176 aa).

The 75-residue stretch at 99–173 folds into the PRC barrel domain; sequence KEGEFHLVDL…WLLIKPPPGL (75 aa).

The protein belongs to the RimM family. Binds ribosomal protein uS19.

It localises to the cytoplasm. An accessory protein needed during the final step in the assembly of 30S ribosomal subunit, possibly for assembly of the head region. Essential for efficient processing of 16S rRNA. May be needed both before and after RbfA during the maturation of 16S rRNA. It has affinity for free ribosomal 30S subunits but not for 70S ribosomes. In Prochlorococcus marinus (strain MIT 9211), this protein is Ribosome maturation factor RimM.